We begin with the raw amino-acid sequence, 310 residues long: Aspartate carbamoyltransferase catalytic subunit (310 aa).

Arg58 and Thr59 together coordinate carbamoyl phosphate. Lys86 is a binding site for L-aspartate. 3 residues coordinate carbamoyl phosphate: Arg108, His136, and Gln139. L-aspartate-binding residues include Arg169 and Arg222. Carbamoyl phosphate is bound by residues Gly264 and Pro265.

Belongs to the aspartate/ornithine carbamoyltransferase superfamily. ATCase family. As to quaternary structure, heterododecamer (2C3:3R2) of six catalytic PyrB chains organized as two trimers (C3), and six regulatory PyrI chains organized as three dimers (R2).

It carries out the reaction carbamoyl phosphate + L-aspartate = N-carbamoyl-L-aspartate + phosphate + H(+). The protein operates within pyrimidine metabolism; UMP biosynthesis via de novo pathway; (S)-dihydroorotate from bicarbonate: step 2/3. In terms of biological role, catalyzes the condensation of carbamoyl phosphate and aspartate to form carbamoyl aspartate and inorganic phosphate, the committed step in the de novo pyrimidine nucleotide biosynthesis pathway. This Campylobacter fetus subsp. fetus (strain 82-40) protein is Aspartate carbamoyltransferase catalytic subunit.